A 388-amino-acid polypeptide reads, in one-letter code: Homoserine O-acetyltransferase (388 aa).

The AB hydrolase-1 domain occupies 55–354 (PIVLIEHALT…PTGHDGFLIE (300 aa)). The Nucleophile role is filled by Ser-150. Substrate is bound at residue Arg-220. Residues Asp-318 and His-348 contribute to the active site. Asp-349 serves as a coordination point for substrate.

The protein belongs to the AB hydrolase superfamily. MetX family. Homodimer.

Its subcellular location is the cytoplasm. The enzyme catalyses L-homoserine + acetyl-CoA = O-acetyl-L-homoserine + CoA. It functions in the pathway amino-acid biosynthesis; L-methionine biosynthesis via de novo pathway; O-acetyl-L-homoserine from L-homoserine: step 1/1. Its function is as follows. Transfers an acetyl group from acetyl-CoA to L-homoserine, forming acetyl-L-homoserine. This Corynebacterium urealyticum (strain ATCC 43042 / DSM 7109) protein is Homoserine O-acetyltransferase.